The chain runs to 666 residues: Frizzled-3 (666 aa).

The signal sequence occupies residues 1–22 (MAVSWIVFDLWLLTVFLGQIGG). Positions 23–136 (HSLFSCEPIT…CSRFPDCDEP (114 aa)) constitute an FZ domain. At 23–205 (HSLFSCEPIT…REELSFARYF (183 aa)) the chain is on the extracellular side. 5 disulfide bridges follow: Cys28/Cys89, Cys36/Cys82, Cys73/Cys110, Cys99/Cys133, and Cys103/Cys127. N-linked (GlcNAc...) asparagine glycosylation is present at Asn42. A helical transmembrane segment spans residues 206–226 (IGLISIICLSATLFTFLTFLI). At 227-237 (DVTRFRYPERP) the chain is on the cytoplasmic side. The chain crosses the membrane as a helical span at residues 238–258 (IIFYAVCYMMVSLIFFIGFLL). At 259–288 (EDRVACNASSPAQYKASTVTQGSHNKACTM) the chain is on the extracellular side. N-linked (GlcNAc...) asparagine glycosylation occurs at Asn265. A helical membrane pass occupies residues 289-309 (LFMVLYFFTMAGSVWWVILTI). The Cytoplasmic portion of the chain corresponds to 310-328 (TWFLAAVPKWGSEAIEKKA). The helical transmembrane segment at 329–349 (LLFHASAWGIPGTLTIILLAM) threads the bilayer. Residues 350–374 (NKIEGDNISGVCFVGLYDVDALRYF) are Extracellular-facing. A glycan (N-linked (GlcNAc...) asparagine) is linked at Asn356. The chain crosses the membrane as a helical span at residues 375–395 (VLAPLCLYVVVGVSLLLAGII). The Cytoplasmic segment spans residues 396 to 420 (SLNRVRIEIPLEKENQDKLVKFMIR). Residues 421–441 (IGVFSILYLVPLLVVIGCYFY) form a helical membrane-spanning segment. Topologically, residues 442 to 477 (EQAYRGIWETTWIQERCREYHIPCPYQVTQMSRPDL) are extracellular. Residues 478–498 (ILFLMKYLMALIVGIPSIFWV) form a helical membrane-spanning segment. Residues 499-666 (GSKKTCFEWA…RVIEEDGTSA (168 aa)) lie on the Cytoplasmic side of the membrane. A Lys-Thr-X-X-X-Trp motif, mediates interaction with the PDZ domain of Dvl family members motif is present at residues 502–507 (KTCFEW). The tract at residues 538-666 (RDPNTPIIRK…RVIEEDGTSA (129 aa)) is disordered. Residues 550–565 (GTSTQGTSTHASSTQL) show a composition bias toward polar residues. A compositionally biased stretch (basic and acidic residues) spans 617-638 (LTDHSRHSSSHRLNEQSRHSSI). The segment covering 639–656 (RDLSNNPMTHITHGTSMN) has biased composition (polar residues).

This sequence belongs to the G-protein coupled receptor Fz/Smo family. In terms of assembly, interacts with VANGL2. Ubiquitinated by ZNRF3, leading to its degradation by the proteasome. Expressed in the cortex, diencephalon, rostral brainstem and little or no staining is seen in the striatum or cerebellum. Expressed in both hair cells and supporting cells in the utricle, saccule, cristae and the organ of Corti in the inner ear (at protein level). Highly expressed in the CNS. In skin, it is restricted to the epidermis and to the developing hair follicle.

The protein resides in the membrane. The protein localises to the cell membrane. It is found in the cell surface. Its subcellular location is the apical cell membrane. Receptor for Wnt proteins. Most of frizzled receptors are coupled to the beta-catenin canonical signaling pathway, which leads to the activation of disheveled proteins, inhibition of GSK-3 kinase, nuclear accumulation of beta-catenin and activation of Wnt target genes. A second signaling pathway involving PKC and calcium fluxes has been seen for some family members, but it is not yet clear if it represents a distinct pathway or if it can be integrated in the canonical pathway, as PKC seems to be required for Wnt-mediated inactivation of GSK-3 kinase. Both pathways seem to involve interactions with G-proteins. Activation by Wnt5A stimulates PKC activity via a G-protein-dependent mechanism. Involved in transduction and intercellular transmission of polarity information during tissue morphogenesis and/or in differentiated tissues. Plays a role in controlling early axon growth and guidance processes necessary for the formation of a subset of central and peripheral major fiber tracts. Required for the development of major fiber tracts in the central nervous system, including: the anterior commissure, the corpus callosum, the thalamocortical, corticothalamic and nigrostriatal tracts, the corticospinal tract, the fasciculus retroflexus, the mammillothalamic tract, the medial lemniscus, and ascending fiber tracts from the spinal cord to the brain. In the peripheral nervous system, controls axon growth in distinct populations of cranial and spinal motor neurons, including the facial branchimotor nerve, the hypoglossal nerve, the phrenic nerve, and motor nerves innervating dorsal limbs. Involved in the migration of cranial neural crest cells. May also be implicated in the transmission of sensory information from the trunk and limbs to the brain. Controls commissural sensory axons guidance after midline crossing along the anterior-posterior axis in the developing spinal cord in a Wnt-dependent signaling pathway. Together with FZD6, is involved in the neural tube closure and plays a role in the regulation of the establishment of planar cell polarity (PCP), particularly in the orientation of asymmetric bundles of stereocilia on the apical faces of a subset of auditory and vestibular sensory cells located in the inner ear. Promotes neurogenesis by maintaining sympathetic neuroblasts within the cell cycle in a beta-catenin-dependent manner. In Mus musculus (Mouse), this protein is Frizzled-3 (Fzd3).